The sequence spans 1247 residues: Protein jagged-2 (1247 aa).

The N-terminal stretch at 1 to 23 (MRARGWGRLPRRLLLLLVLCVQA) is a signal peptide. Over 24 to 1082 (TRPMGYFELQ…ETVVMGGSST (1059 aa)) the chain is Extracellular. N-linked (GlcNAc...) asparagine glycosylation occurs at Asn153. The DSL domain occupies 196–240 (VRCDENYYSATCNKFCRPRNDFFGHYTCDQYGNKACMDGWMGKEC). Intrachain disulfides connect Cys198–Cys207, Cys211–Cys223, Cys231–Cys240, Cys245–Cys256, Cys249–Cys262, Cys264–Cys273, Cys276–Cys287, Cys282–Cys293, Cys295–Cys304, Cys311–Cys323, Cys317–Cys333, Cys335–Cys344, Cys351–Cys362, Cys356–Cys371, Cys373–Cys382, Cys389–Cys400, Cys394–Cys409, Cys411–Cys420, Cys427–Cys438, Cys432–Cys447, Cys449–Cys458, Cys465–Cys475, Cys469–Cys484, Cys486–Cys495, Cys502–Cys513, Cys507–Cys522, Cys524–Cys533, Cys540–Cys551, Cys545–Cys560, Cys562–Cys571, Cys589–Cys612, Cys606–Cys622, Cys624–Cys633, Cys640–Cys651, Cys645–Cys660, Cys662–Cys671, Cys678–Cys689, Cys683–Cys698, Cys700–Cys709, Cys716–Cys727, Cys721–Cys736, and Cys738–Cys747. The EGF-like 1 domain maps to 241–274 (KEAVCKQGCNLLHGGCTVPGECRCSYGWQGKFCD). One can recognise an EGF-like 2; atypical domain in the interval 275–305 (ECVPYPGCVHGSCVEPWHCDCETNWGGLLCD). EGF-like domains lie at 307–345 (DLNYCGSHHPCVNGGTCINAEPDQYLCACPDGYLGKNCE) and 347–383 (AEHACASNPCANGGSCHEVPSGFECHCPSGWNGPTCA). In terms of domain architecture, EGF-like 5; calcium-binding spans 385-421 (DIDECASNPCAAGGTCVDQVDGFECICPEQWVGATCQ). Positions 423–459 (DANECEGKPCLNAFSCKNLIGGYYCDCLPGWKGINCQ) constitute an EGF-like 6; calcium-binding domain. Residues 461–496 (NINDCHGQCQHGGTCKDLVNGYQCVCPRGFGGRHCE) form the EGF-like 7; calcium-binding domain. EGF-like domains are found at residues 498–534 (EYDKCASSPCRRGGICEDLVDGFRCHCPRGLSGLHCE) and 536–572 (DMDLCEPSPCLNGARCYNLEGDYYCACPEDFGGKNCS). Residue Asn570 is glycosylated (N-linked (GlcNAc...) asparagine). The 61-residue stretch at 574–634 (PRDTCPGGAC…DSGFTGTYCH (61 aa)) folds into the EGF-like 10; atypical domain. N-linked (GlcNAc...) asparagine glycosylation is present at Asn619. Residues 636 to 672 (NIDDCMGQPCRNGGTCIDEVDSFRCFCPSGWEGELCD) form the EGF-like 11; calcium-binding domain. One can recognise an EGF-like 12; calcium-binding domain in the interval 674-710 (NPNDCLPDPCHSRGRCYDLVNDFYCACDDGWKGKTCH). EGF-like domains are found at residues 712-748 (REFQCDAYTCSNGGTCYDSGDTFRCACPPGWKGSTCT) and 751-787 (KNSSCVPNPCVNGGTCVGSGDSFSCICRDGWEGRTCT). N-linked (GlcNAc...) asparagine glycosylation is present at Asn752. 9 disulfide bridges follow: Cys755/Cys766, Cys760/Cys775, Cys777/Cys786, Cys793/Cys804, Cys798/Cys813, Cys815/Cys824, Cys831/Cys842, Cys836/Cys851, and Cys853/Cys862. Residues 789-825 (NTNDCNPLPCYNGGICVDGVNWFRCECAPGFAGPDCR) form the EGF-like 15; calcium-binding domain. The EGF-like 16; calcium-binding domain maps to 827–863 (NIDECQSSPCAYGATCVDEINGYRCSCPPGRSGPRCQ). Asn1060 carries N-linked (GlcNAc...) asparagine glycosylation. Residues 1083–1103 (GLLVPVLCSVFSVLWLACVVI) form a helical membrane-spanning segment. Residues 1104–1247 (CVWWTRKRRK…TKDVRRAGRE (144 aa)) lie on the Cytoplasmic side of the membrane. Composition is skewed to basic and acidic residues over residues 1115-1125 (RERSRLPRDES), 1192-1212 (LSRGDGDSPEAEKFISHKFTK), and 1230-1247 (VDNRAVRSTKDVRRAGRE). 2 disordered regions span residues 1115–1148 (RERSRLPRDESANNQWAPLNPIRNPIERPGGSGL) and 1167–1247 (PRRA…AGRE). Phosphoserine is present on Ser1125.

In terms of tissue distribution, found to be highest in fetal thymus, epidermis, foregut dorsal root ganglia and inner ear. In 2-weeK-old mice, abundant in heart, lung, thymus, skeletal muscle, brain and testis. Expression overlaps partially with Notch1 expression.

The protein localises to the membrane. Its function is as follows. Putative Notch ligand involved in the mediation of Notch signaling. Plays an essential role during limb, craniofacial and thymic development. May be involved in myogenesis and in the development of peripheral and central nervous systems. The sequence is that of Protein jagged-2 (Jag2) from Mus musculus (Mouse).